Consider the following 449-residue polypeptide: Glutamyl-tRNA reductase (449 aa).

Substrate is bound by residues 58 to 61 (TCNR), S121, 126 to 128 (ETQ), and Q132. Catalysis depends on C59, which acts as the Nucleophile. 203–208 (GLGEMA) contacts NADP(+).

The protein belongs to the glutamyl-tRNA reductase family. As to quaternary structure, homodimer.

It catalyses the reaction (S)-4-amino-5-oxopentanoate + tRNA(Glu) + NADP(+) = L-glutamyl-tRNA(Glu) + NADPH + H(+). The protein operates within porphyrin-containing compound metabolism; protoporphyrin-IX biosynthesis; 5-aminolevulinate from L-glutamyl-tRNA(Glu): step 1/2. In terms of biological role, catalyzes the NADPH-dependent reduction of glutamyl-tRNA(Glu) to glutamate 1-semialdehyde (GSA). This Helicobacter pylori (strain Shi470) protein is Glutamyl-tRNA reductase.